Consider the following 847-residue polypeptide: MQRLRRGLFLLLGVGLGILAITGLAAFYVDLAWFAELHALPVLWTRVIARWGLGLGAFLFALAVTGSNICSCWRGATLAGAWAIATGLSVFFAGSLSNHWFTLLLWLNQGPVGESDPIFNRDLGFFLFSLPFWETLQHWCFNLVLLTLIAVVLIYLVELGLSEQRLTLALSLYAQRHLLILGGSLFLIRAWGHWLERYELLYSTRGVVFGAGFADVHATLPATTLMSGVAGLTAVGFWALARQGIRLNLPFLKSWCPSWASSLLAPAILWGAYLGFGLLTTQLYPQLVQTFLVTPNELELERPYIEDNIRFTRAGFGLADVEVQPFPEGGALTWEILQQNQSTLSNVRLWDADPLLATYRQLQEIRPYYQFPYVNVDRYRIGGELRQVMHAARELDFAQVPPAAQTWVNRRFFYTHGYGLTLSPVNVVTPEGLPDFFLSDIPPRVSPRYPEVASVLRVEQPALYYGELTTTDVFVGAEARELDYPAAERYVYSSYRGSGGVPIPHLWQRFLYAWHFGDLRILLSRELSSATRFLYRRQIRERIRRVMPFLLYDRDPYLVIQGGKLYWFFDAYTTSSRYPYSEHLPGFPFNYIRNSVKAVMDAYNGSIDWYIADPRDPLIQAYARIYPTLFKPLEAMPEPLRQHIRYPQDLFRLQAQQFATYHMTDPRLFYNREDQWQIPGQFRNRRRIPMQPQYLILTLPRDPQGVANHTPEFVLLSPYAPVNKQNMVAWIAARCDGENYGKLLVYEFSKQRLIYGPEQVEARVNQDPLISEQISLWNQHGSRVNLGTLLVIPIETSLLYVQPLYIEAEQGRLPQLTRVIAAYEDRVVMEPTLGQALEALFLPRGSR.

A run of 7 helical transmembrane segments spans residues 7-27, 51-71, 76-96, 141-161, 168-188, 220-240, and 259-279; these read GLFLLLGVGLGILAITGLAAF, WGLGLGAFLFALAVTGSNICS, ATLAGAWAIATGLSVFFAGSL, FNLVLLTLIAVVLIYLVELGL, LALSLYAQRHLLILGGSLFLI, LPATTLMSGVAGLTAVGFWAL, and WASSLLAPAILWGAYLGFGLL.

This sequence belongs to the UPF0182 family.

It is found in the cell membrane. This is UPF0182 protein CYB_0372 from Synechococcus sp. (strain JA-2-3B'a(2-13)) (Cyanobacteria bacterium Yellowstone B-Prime).